Here is a 201-residue protein sequence, read N- to C-terminus: Ras-related protein Rab-5A (201 aa).

GTP-binding positions include glycine 16–serine 24, leucine 35–threonine 41, aspartate 64–glutamine 68, asparagine 122–aspartate 125, and serine 152–lysine 154. An Effector region motif is present at residues glutamine 38–phenylalanine 46. 2 S-geranylgeranyl cysteine lipidation sites follow: cysteine 199 and cysteine 200.

The protein belongs to the small GTPase superfamily. Rab family.

The protein localises to the cell membrane. It localises to the endosome membrane. Regulated by guanine nucleotide exchange factors (GEFs) which promote the exchange of bound GDP for free GTP. Functionally, required for the fusion of plasma membranes and early endosomes. In Dictyostelium discoideum (Social amoeba), this protein is Ras-related protein Rab-5A (rab5A).